The following is a 261-amino-acid chain: Indole-3-glycerol phosphate synthase (261 aa).

Belongs to the TrpC family.

It catalyses the reaction 1-(2-carboxyphenylamino)-1-deoxy-D-ribulose 5-phosphate + H(+) = (1S,2R)-1-C-(indol-3-yl)glycerol 3-phosphate + CO2 + H2O. It participates in amino-acid biosynthesis; L-tryptophan biosynthesis; L-tryptophan from chorismate: step 4/5. The chain is Indole-3-glycerol phosphate synthase from Paraburkholderia xenovorans (strain LB400).